The following is a 185-amino-acid chain: Regulatory protein RecX (185 aa).

This sequence belongs to the RecX family.

It localises to the cytoplasm. Modulates RecA activity. The protein is Regulatory protein RecX of Thermobifida fusca (strain YX).